Consider the following 432-residue polypeptide: Uracil permease (432 aa).

12 helical membrane-spanning segments follow: residues 25–45 (LFAM…DPSI), 65–85 (VPAY…AKTA), 89–109 (GAAM…ALII), 124–144 (VVVG…AVGM), 155–175 (LLHF…SVLA), 181–201 (LIPV…VGLV), 206–226 (VAAA…DYPV), 228–248 (VTWE…SEHI), 305–325 (VYSV…GFVG), 330–350 (LISS…FGII), 370–390 (NLVI…LKIS), and 393–413 (FQIT…LILP).

The protein belongs to the nucleobase:cation symporter-2 (NCS2) (TC 2.A.40) family.

Its subcellular location is the cell membrane. Its function is as follows. Transport of uracil in the cell. The polypeptide is Uracil permease (pyrP) (Bacillus caldolyticus).